A 395-amino-acid polypeptide reads, in one-letter code: Inactive serine protease 54 (395 aa).

The N-terminal stretch at 1–30 (MVSAAGLSGDGKMRGVLLVLLGLLYSSTSC) is a signal peptide. A Peptidase S1 domain is found at 37–269 (VFYGPDPKEG…YSKWITSKAE (233 aa)). Residue asparagine 123 is glycosylated (N-linked (GlcNAc...) asparagine). Intrachain disulfides connect cysteine 164-cysteine 227, cysteine 195-cysteine 205, and cysteine 217-cysteine 248. A disordered region spans residues 324-348 (RLGNSSRDSLDVREKDVKESGRSPE). A glycan (N-linked (GlcNAc...) asparagine) is linked at asparagine 327. Residues 331–345 (DSLDVREKDVKESGR) are compositionally biased toward basic and acidic residues.

This sequence belongs to the peptidase S1 family. Plasma kallikrein subfamily.

The protein localises to the secreted. The chain is Inactive serine protease 54 (PRSS54) from Homo sapiens (Human).